A 265-amino-acid polypeptide reads, in one-letter code: NAD kinase (265 aa).

Asp-45 acts as the Proton acceptor in catalysis. Residues 45–46 (DG), 121–122 (NE), Arg-147, Asp-149, Ala-184, and Gln-221 each bind NAD(+).

The protein belongs to the NAD kinase family. A divalent metal cation is required as a cofactor.

The protein localises to the cytoplasm. The enzyme catalyses NAD(+) + ATP = ADP + NADP(+) + H(+). Involved in the regulation of the intracellular balance of NAD and NADP, and is a key enzyme in the biosynthesis of NADP. Catalyzes specifically the phosphorylation on 2'-hydroxyl of the adenosine moiety of NAD to yield NADP. The chain is NAD kinase from Leuconostoc citreum (strain KM20).